Here is a 160-residue protein sequence, read N- to C-terminus: Transcriptional repressor NrdR (160 aa).

A zinc finger lies at 3–34; sequence CPYCQYEDTQVKDSRPAEEGAVIRRRRVCSVC. In terms of domain architecture, ATP-cone spans 49–139; sequence LLITKKNGRC…VYRDFRNASD (91 aa).

Belongs to the NrdR family. Zn(2+) is required as a cofactor.

Its function is as follows. Negatively regulates transcription of bacterial ribonucleotide reductase nrd genes and operons by binding to NrdR-boxes. The polypeptide is Transcriptional repressor NrdR (Bartonella tribocorum (strain CIP 105476 / IBS 506)).